The sequence spans 190 residues: uncharacterized protein (190 aa).

The Cytoplasmic segment spans residues 1 to 16 (MAILPEFISQTPPVTR). Residues 17-37 (YIVLGTLFTTLAVNFGYVSDL) form a helical membrane-spanning segment. The Lumenal segment spans residues 38 to 55 (KIFFNWKLFLAKGEYWRA). A helical transmembrane segment spans residues 56–76 (ITTFLYVGPFGLELILYLSFL). The Cytoplasmic segment spans residues 77–98 (LRFMSMLERSSPPPQTQSFLKT). Residues 99 to 119 (VLIVWFSLLVTSYFSYMPFAA) form a helical membrane-spanning segment. The Lumenal portion of the chain corresponds to 120–138 (SYFSFTMLYIWSWKHPLYR). A helical membrane pass occupies residues 139 to 159 (ISILGLFDVKAPYVPWVMVLL). Residues 160-163 (RWLR) lie on the Cytoplasmic side of the membrane. The helical transmembrane segment at 164 to 184 (TGIFPLLDLISALIGHVYFFV) threads the bilayer. Residues 185-190 (TDFSTV) are Lumenal-facing.

The protein belongs to the derlin family.

It is found in the endoplasmic reticulum membrane. This is an uncharacterized protein from Schizosaccharomyces pombe (strain 972 / ATCC 24843) (Fission yeast).